The primary structure comprises 213 residues: FMN-dependent NADH:quinone oxidoreductase (213 aa).

17 to 19 (SSS) is an FMN binding site.

Belongs to the azoreductase type 1 family. As to quaternary structure, homodimer. FMN is required as a cofactor.

It carries out the reaction 2 a quinone + NADH + H(+) = 2 a 1,4-benzosemiquinone + NAD(+). The enzyme catalyses N,N-dimethyl-1,4-phenylenediamine + anthranilate + 2 NAD(+) = 2-(4-dimethylaminophenyl)diazenylbenzoate + 2 NADH + 2 H(+). In terms of biological role, quinone reductase that provides resistance to thiol-specific stress caused by electrophilic quinones. Functionally, also exhibits azoreductase activity. Catalyzes the reductive cleavage of the azo bond in aromatic azo compounds to the corresponding amines. This chain is FMN-dependent NADH:quinone oxidoreductase, found in Ruminiclostridium cellulolyticum (strain ATCC 35319 / DSM 5812 / JCM 6584 / H10) (Clostridium cellulolyticum).